Consider the following 343-residue polypeptide: Flagellar motor switch protein FliG (343 aa).

A Part of the EHPQR-motif motif is present at residues 137-140; the sequence is EHPQ. An M-F-X-F motif; its intrinsic flexibility is probably coupled to flagellar rotation motif is present at residues 245-248; that stretch reads MFTF.

It belongs to the FliG family.

The protein localises to the cell inner membrane. It localises to the bacterial flagellum basal body. One of the proteins that forms a switch complex that is proposed to be located at the base of the basal body. This complex interacts with chemotaxis proteins (such as CheY) in addition to contacting components of the motor that determine the direction of flagellar rotation. Required for flagellum synthesis and motility. In H.pylori four flagellar switch proteins are encoded, FliG, FliM, FliN and FliY. This is Flagellar motor switch protein FliG from Helicobacter pylori (strain ATCC 700392 / 26695) (Campylobacter pylori).